Consider the following 60-residue polypeptide: Large ribosomal subunit protein uL30 (60 aa).

It belongs to the universal ribosomal protein uL30 family. As to quaternary structure, part of the 50S ribosomal subunit.

The protein is Large ribosomal subunit protein uL30 of Baumannia cicadellinicola subsp. Homalodisca coagulata.